Reading from the N-terminus, the 162-residue chain is NADH-quinone oxidoreductase subunit I (162 aa).

4Fe-4S ferredoxin-type domains are found at residues 53-83 (LRRY…IESE) and 93-122 (TRYD…ETHI). Residues Cys63, Cys66, Cys69, Cys73, Cys102, Cys105, Cys108, and Cys112 each contribute to the [4Fe-4S] cluster site.

The protein belongs to the complex I 23 kDa subunit family. In terms of assembly, NDH-1 is composed of 14 different subunits. Subunits NuoA, H, J, K, L, M, N constitute the membrane sector of the complex. [4Fe-4S] cluster is required as a cofactor.

Its subcellular location is the cell inner membrane. It carries out the reaction a quinone + NADH + 5 H(+)(in) = a quinol + NAD(+) + 4 H(+)(out). In terms of biological role, NDH-1 shuttles electrons from NADH, via FMN and iron-sulfur (Fe-S) centers, to quinones in the respiratory chain. The immediate electron acceptor for the enzyme in this species is believed to be ubiquinone. Couples the redox reaction to proton translocation (for every two electrons transferred, four hydrogen ions are translocated across the cytoplasmic membrane), and thus conserves the redox energy in a proton gradient. This Herminiimonas arsenicoxydans protein is NADH-quinone oxidoreductase subunit I.